The following is a 357-amino-acid chain: Elongation factor Ts (357 aa).

The interval 82–85 (TDFV) is involved in Mg(2+) ion dislocation from EF-Tu.

The protein belongs to the EF-Ts family.

Its subcellular location is the cytoplasm. Its function is as follows. Associates with the EF-Tu.GDP complex and induces the exchange of GDP to GTP. It remains bound to the aminoacyl-tRNA.EF-Tu.GTP complex up to the GTP hydrolysis stage on the ribosome. The polypeptide is Elongation factor Ts (Campylobacter jejuni subsp. jejuni serotype O:2 (strain ATCC 700819 / NCTC 11168)).